The following is a 255-amino-acid chain: uncharacterized protein (255 aa).

Positions 1–23 (MKRLNTLVLYISFLILIISIVAG) are cleaved as a signal peptide. Cys-24 is lipidated: N-palmitoyl cysteine. Cys-24 carries S-diacylglycerol cysteine lipidation.

It belongs to the staphylococcal tandem lipoprotein family.

The protein resides in the cell membrane. This is an uncharacterized protein from Staphylococcus aureus (strain N315).